A 124-amino-acid polypeptide reads, in one-letter code: LOB domain-containing protein 9 (124 aa).

The 103-residue stretch at 11-113 folds into the LOB domain; it reads APCALCTTKN…IYLNELKEKI (103 aa).

It belongs to the LOB domain-containing protein family.

This Arabidopsis thaliana (Mouse-ear cress) protein is LOB domain-containing protein 9 (LBD9).